The sequence spans 233 residues: Glucosamine-6-phosphate deaminase (233 aa).

D62 serves as the catalytic Proton acceptor; for enolization step. N128 functions as the For ring-opening step in the catalytic mechanism. H130 serves as the catalytic Proton acceptor; for ring-opening step. The For ring-opening step role is filled by E135.

The protein belongs to the glucosamine/galactosamine-6-phosphate isomerase family. NagB subfamily.

The enzyme catalyses alpha-D-glucosamine 6-phosphate + H2O = beta-D-fructose 6-phosphate + NH4(+). Its pathway is amino-sugar metabolism; N-acetylneuraminate degradation; D-fructose 6-phosphate from N-acetylneuraminate: step 5/5. Functionally, catalyzes the reversible isomerization-deamination of glucosamine 6-phosphate (GlcN6P) to form fructose 6-phosphate (Fru6P) and ammonium ion. This Streptococcus pneumoniae serotype 4 (strain ATCC BAA-334 / TIGR4) protein is Glucosamine-6-phosphate deaminase.